The primary structure comprises 182 residues: MAQDKENLIWIDLEMTGLDPEQERIIEIATIVTDKNLNILAEGPVLAVHQPNQLLDKMSDWCIKTHTANGLVERVKASKLTERAAELQTIDFLKLWVPKGASPICGNSVAQDKRFLFKYMPDLADYFHYRHLDVSTLKELARRWKPEISDGFQKANTHLALDDIRESIKELAYYREHFIKLD.

Residues 8–171 (LIWIDLEMTG…DDIRESIKEL (164 aa)) enclose the Exonuclease domain. Tyr129 is an active-site residue.

The protein belongs to the oligoribonuclease family.

The protein localises to the cytoplasm. In terms of biological role, 3'-to-5' exoribonuclease specific for small oligoribonucleotides. This chain is Oligoribonuclease, found in Actinobacillus succinogenes (strain ATCC 55618 / DSM 22257 / CCUG 43843 / 130Z).